Reading from the N-terminus, the 128-residue chain is 3-aminoacrylate deaminase RutC (128 aa).

It belongs to the RutC family. As to quaternary structure, homotrimer.

The catalysed reaction is (Z)-3-aminoacrylate + H2O + H(+) = 3-oxopropanoate + NH4(+). Involved in pyrimidine catabolism. Catalyzes the deamination of 3-aminoacrylate to malonic semialdehyde, a reaction that can also occur spontaneously. RutC may facilitate the reaction and modulate the metabolic fitness, rather than catalyzing essential functions. The sequence is that of 3-aminoacrylate deaminase RutC from Escherichia coli (strain SE11).